A 367-amino-acid chain; its full sequence is Aminomethyltransferase (367 aa).

Belongs to the GcvT family. The glycine cleavage system is composed of four proteins: P, T, L and H.

It carries out the reaction N(6)-[(R)-S(8)-aminomethyldihydrolipoyl]-L-lysyl-[protein] + (6S)-5,6,7,8-tetrahydrofolate = N(6)-[(R)-dihydrolipoyl]-L-lysyl-[protein] + (6R)-5,10-methylene-5,6,7,8-tetrahydrofolate + NH4(+). Functionally, the glycine cleavage system catalyzes the degradation of glycine. In Mycobacterium leprae (strain Br4923), this protein is Aminomethyltransferase.